The chain runs to 382 residues: MAQSDLYGVLGVAKDASQDEIKKAYRKLSKKYHPDLNKAPDAAEKFKEVQDAYDVLGDEQKRANYDQSGSADGAQGGFGGFGGGQQGGFGGFGGGGGFDDIFNQFFGGGGGQRNPNAPRPGRDLQYQMDLTFEEAIFGKKTKIKYNREAQCHTCGGNGAKPGTSPVTCHQCGGSGYVTTETNTPLGRMRSQQPCPVCHGTGQEIKEKCPTCGGSGHEEERHEVEVTIPAGVDDGQQMRLQGQGEAGQNGGGYGDLFIIFKVQPSKDFRRDGTEIYFDQDISFVQATLGDDVTVKTVHGDVKLKVPAGTQGGTTFRLRGKGAPRLRGNGNGDEHVTIKVVTPKNLNKGQRDALRDFAKASGESVTGSGKGNLFNKMRDKFNEN.

In terms of domain architecture, J spans 5–69 (DLYGVLGVAK…QKRANYDQSG (65 aa)). Residues 104–123 (QFFGGGGGQRNPNAPRPGRD) are disordered. A CR-type zinc finger spans residues 138–220 (GKKTKIKYNR…CGGSGHEEER (83 aa)). Zn(2+) contacts are provided by Cys-151, Cys-154, Cys-168, Cys-171, Cys-194, Cys-197, Cys-208, and Cys-211. 4 CXXCXGXG motif repeats span residues 151 to 158 (CHTCGGNG), 168 to 175 (CHQCGGSG), 194 to 201 (CPVCHGTG), and 208 to 215 (CPTCGGSG). Positions 358–382 (ASGESVTGSGKGNLFNKMRDKFNEN) are disordered.

The protein belongs to the DnaJ family. As to quaternary structure, homodimer. The cofactor is Zn(2+).

The protein localises to the cytoplasm. Its function is as follows. Participates actively in the response to hyperosmotic and heat shock by preventing the aggregation of stress-denatured proteins and by disaggregating proteins, also in an autonomous, DnaK-independent fashion. Unfolded proteins bind initially to DnaJ; upon interaction with the DnaJ-bound protein, DnaK hydrolyzes its bound ATP, resulting in the formation of a stable complex. GrpE releases ADP from DnaK; ATP binding to DnaK triggers the release of the substrate protein, thus completing the reaction cycle. Several rounds of ATP-dependent interactions between DnaJ, DnaK and GrpE are required for fully efficient folding. Also involved, together with DnaK and GrpE, in the DNA replication of plasmids through activation of initiation proteins. In Levilactobacillus brevis (strain ATCC 367 / BCRC 12310 / CIP 105137 / JCM 1170 / LMG 11437 / NCIMB 947 / NCTC 947) (Lactobacillus brevis), this protein is Chaperone protein DnaJ.